Reading from the N-terminus, the 644-residue chain is Exoribonuclease 2 (644 aa).

In terms of domain architecture, RNB spans 189–516 (REDLTALDFV…NHRLLKAVIK (328 aa)). In terms of domain architecture, S1 motif spans 561–643 (DTRFAAEIVD…ETRSIIARPV (83 aa)).

Belongs to the RNR ribonuclease family. RNase II subfamily.

It localises to the cytoplasm. It carries out the reaction Exonucleolytic cleavage in the 3'- to 5'-direction to yield nucleoside 5'-phosphates.. Functionally, involved in mRNA degradation. Hydrolyzes single-stranded polyribonucleotides processively in the 3' to 5' direction. The protein is Exoribonuclease 2 of Escherichia coli (strain ATCC 8739 / DSM 1576 / NBRC 3972 / NCIMB 8545 / WDCM 00012 / Crooks).